The primary structure comprises 243 residues: Thaumatin-like protein 1 (243 aa).

Residues Met1 to Ser22 form the signal peptide. 8 disulfide bridges follow: Cys31/Cys242, Cys79/Cys88, Cys93/Cys100, Cys148/Cys231, Cys153/Cys214, Cys161/Cys177, Cys181/Cys190, and Cys191/Cys201.

This sequence belongs to the thaumatin family.

It localises to the secreted. The protein localises to the extracellular space. It is found in the apoplast. Possesses antifungal activity. In Castanea sativa (Sweet chestnut), this protein is Thaumatin-like protein 1 (TL1).